The following is a 250-amino-acid chain: Nuclear transcription factor Y subunit C-4 (250 aa).

Residues 219-250 (GIAYGGQQGHPGYLWQDPQEQQEEPPAEQQSD) are disordered. Over residues 238-250 (EQQEEPPAEQQSD) the composition is skewed to acidic residues.

This sequence belongs to the NFYC/HAP5 subunit family. As to quaternary structure, heterotrimeric transcription factor composed of three components, NF-YA, NF-YB and NF-YC. NF-YB and NF-YC must interact and dimerize for NF-YA association and DNA binding. Interacts with NFYB2. Interacts with NFYB8, NFYB10 and HD5/NFYB11.

The protein localises to the nucleus. Its subcellular location is the cytoplasm. Functionally, probable transcription factor involved in the regulation of flowering time under long day (LD) conditions. Functions as a repressor of flowering, independently of HD1 and GHD7. Controls flowering time by negatively regulating the expression of EHD1 and HD3A. Component of the NF-Y/HAP transcription factor complex. This Oryza sativa subsp. japonica (Rice) protein is Nuclear transcription factor Y subunit C-4.